The chain runs to 265 residues: 3-methyl-2-oxobutanoate hydroxymethyltransferase (265 aa).

The Mg(2+) site is built by D45 and D84. Residues 45-46 (DS), D84, and K112 contribute to the 3-methyl-2-oxobutanoate site. E114 serves as a coordination point for Mg(2+). Catalysis depends on E181, which acts as the Proton acceptor.

It belongs to the PanB family. In terms of assembly, homodecamer; pentamer of dimers. Requires Mg(2+) as cofactor.

It localises to the cytoplasm. The enzyme catalyses 3-methyl-2-oxobutanoate + (6R)-5,10-methylene-5,6,7,8-tetrahydrofolate + H2O = 2-dehydropantoate + (6S)-5,6,7,8-tetrahydrofolate. It participates in cofactor biosynthesis; (R)-pantothenate biosynthesis; (R)-pantoate from 3-methyl-2-oxobutanoate: step 1/2. Catalyzes the reversible reaction in which hydroxymethyl group from 5,10-methylenetetrahydrofolate is transferred onto alpha-ketoisovalerate to form ketopantoate. This Wigglesworthia glossinidia brevipalpis protein is 3-methyl-2-oxobutanoate hydroxymethyltransferase.